Reading from the N-terminus, the 147-residue chain is Hemoglobin subunit beta-1 (147 aa).

Residue Val-2 is modified to N-acetylvaline. A Globin domain is found at 3-147 (HLTGEEKAAV…VATALAHKYH (145 aa)). Lys-18 is modified (N6-succinyllysine). Position 45 is a phosphoserine (Ser-45). Position 60 is an N6-succinyllysine (Lys-60). 2 residues coordinate heme b: His-64 and His-93. Arg-105 carries the post-translational modification Asymmetric dimethylarginine. At Thr-124 the chain carries Phosphothreonine.

Belongs to the globin family. In terms of assembly, hb1 is a heterotetramer of two alpha chains and two beta-1 chains. As to expression, red blood cells.

Involved in oxygen transport from the lung to the various peripheral tissues. The protein is Hemoglobin subunit beta-1 (HBB1) of Chalinolobus morio (Chocolate-wattled bat).